Here is a 282-residue protein sequence, read N- to C-terminus: Acetylglutamate kinase (282 aa).

Substrate contacts are provided by residues 62-63 (GG), Arg84, and Asn178.

It belongs to the acetylglutamate kinase family. ArgB subfamily.

The protein localises to the cytoplasm. The enzyme catalyses N-acetyl-L-glutamate + ATP = N-acetyl-L-glutamyl 5-phosphate + ADP. It participates in amino-acid biosynthesis; L-arginine biosynthesis; N(2)-acetyl-L-ornithine from L-glutamate: step 2/4. Its function is as follows. Catalyzes the ATP-dependent phosphorylation of N-acetyl-L-glutamate. The polypeptide is Acetylglutamate kinase (Kosmotoga olearia (strain ATCC BAA-1733 / DSM 21960 / TBF 19.5.1)).